A 78-amino-acid polypeptide reads, in one-letter code: Large ribosomal subunit protein bL31 (78 aa).

Belongs to the bacterial ribosomal protein bL31 family. Type A subfamily. In terms of assembly, part of the 50S ribosomal subunit.

In terms of biological role, binds the 23S rRNA. This Rickettsia prowazekii (strain Madrid E) protein is Large ribosomal subunit protein bL31.